Consider the following 99-residue polypeptide: Integration host factor subunit alpha (99 aa).

Residues Phe49–Ala75 are disordered.

This sequence belongs to the bacterial histone-like protein family. As to quaternary structure, heterodimer of an alpha and a beta chain.

This protein is one of the two subunits of integration host factor, a specific DNA-binding protein that functions in genetic recombination as well as in transcriptional and translational control. The sequence is that of Integration host factor subunit alpha from Klebsiella pneumoniae (strain 342).